Here is a 101-residue protein sequence, read N- to C-terminus: Non-histone chromosomal protein HMG-14 (101 aa).

A disordered region spans residues methionine 1–aspartate 101. Position 7 is an ADP-ribosylserine (serine 7). Serine 8 carries the phosphoserine modification. Lysine 14 bears the N6-acetyllysine mark. Residue serine 21 is modified to Phosphoserine. ADP-ribosylserine; alternate is present on serine 25. Serine 25 is modified (phosphoserine; alternate). The residue at position 27 (lysine 27) is an N6-acetyllysine. 2 stretches are compositionally biased toward basic and acidic residues: residues valine 33–valine 51 and glutamate 70–glutamate 86. Residue threonine 82 is modified to Phosphothreonine. N6-acetyllysine is present on lysine 83. Phosphoserine is present on residues serine 87, serine 90, and serine 100.

Belongs to the HMGN family. As to quaternary structure, interacts with transcriptional regulator SEHBP. Post-translationally, phosphorylation on Ser-21 and Ser-25 weakens binding to nucleosomes and increases the rate of H3 phosphorylation.

The protein localises to the nucleus. In terms of biological role, binds to the inner side of the nucleosomal DNA thus altering the interaction between the DNA and the histone octamer. May be involved in the process which maintains transcribable genes in a unique chromatin conformation. Inhibits the phosphorylation of nucleosomal histones H3 and H2A by RPS6KA5/MSK1 and RPS6KA3/RSK2. This chain is Non-histone chromosomal protein HMG-14 (HMGN1), found in Bos taurus (Bovine).